The sequence spans 251 residues: Chromobox protein homolog 7 (251 aa).

The 59-residue stretch at 11 to 69 folds into the Chromo domain; sequence FAVESIRKKRVRKGKVEYLVKWKGWPPKYSTWEPEEHILDPRLVMAYEEKEERDRASGY. The tract at residues 190–220 is disordered; sequence EPAAQPPEEEADADLAEGPPPWTPALPSSEV. The tract at residues 223-236 is required for cellular lifespan extension; it reads TDITANSITVTFRE.

In terms of assembly, component of a PRC1-like complex. Interacts with RING1 and RNF2/RING1B, but not with BMI1, EED or EZH2. Interacts with PCGF1, PCGF2, PCGF3, PCGF5 and PCGF6.

It is found in the nucleus. In terms of biological role, component of a Polycomb group (PcG) multiprotein PRC1-like complex, a complex class required to maintain the transcriptionally repressive state of many genes, including Hox genes, throughout development. PcG PRC1 complex acts via chromatin remodeling and modification of histones; it mediates monoubiquitination of histone H2A 'Lys-119', rendering chromatin heritably changed in its expressibility. Promotes histone H3 trimethylation at 'Lys-9' (H3K9me3). Binds to trimethylated lysine residues in histones, and possibly also other proteins. Regulator of cellular lifespan by maintaining the repression of CDKN2A, but not by inducing telomerase activity. The polypeptide is Chromobox protein homolog 7 (CBX7) (Homo sapiens (Human)).